The chain runs to 73 residues: UPF0057 membrane protein At4g30650 (73 aa).

A run of 2 helical transmembrane segments spans residues 4–24 and 37–57; these read NMEVFCEILIAILLPPLGVCL and LVLTILGYIPGIIYALYVIVF.

This sequence belongs to the UPF0057 (PMP3) family.

The protein localises to the membrane. This Arabidopsis thaliana (Mouse-ear cress) protein is UPF0057 membrane protein At4g30650.